The sequence spans 534 residues: Apolipoprotein N-acyltransferase (534 aa).

Helical transmembrane passes span 8-28, 31-51, 69-89, 105-125, 127-147, 178-198, and 208-228; these read VILV…AFAV, LPPF…VWLI, AFAV…WWLG, LAIL…VALA, IFWS…GLME, VIGA…PALF, and VALA…ALYL. Positions 246–496 constitute a CN hydrolase domain; it reads VQPDIDQAAK…TGFIDATVDS (251 aa). The active-site Proton acceptor is the glutamate 291. Lysine 355 is a catalytic residue. Cysteine 408 (nucleophile) is an active-site residue. A helical membrane pass occupies residues 511–531; that stretch reads FWLTEALLILIALISREGFIF.

Belongs to the CN hydrolase family. Apolipoprotein N-acyltransferase subfamily.

Its subcellular location is the cell inner membrane. The catalysed reaction is N-terminal S-1,2-diacyl-sn-glyceryl-L-cysteinyl-[lipoprotein] + a glycerophospholipid = N-acyl-S-1,2-diacyl-sn-glyceryl-L-cysteinyl-[lipoprotein] + a 2-acyl-sn-glycero-3-phospholipid + H(+). It participates in protein modification; lipoprotein biosynthesis (N-acyl transfer). Functionally, catalyzes the phospholipid dependent N-acylation of the N-terminal cysteine of apolipoprotein, the last step in lipoprotein maturation. This Rhizobium etli (strain CIAT 652) protein is Apolipoprotein N-acyltransferase.